The sequence spans 280 residues: UDP-3-O-acyl-N-acetylglucosamine deacetylase (280 aa).

His79, His237, and Asp241 together coordinate Zn(2+). His264 serves as the catalytic Proton donor.

It belongs to the LpxC family. Zn(2+) serves as cofactor.

It carries out the reaction a UDP-3-O-[(3R)-3-hydroxyacyl]-N-acetyl-alpha-D-glucosamine + H2O = a UDP-3-O-[(3R)-3-hydroxyacyl]-alpha-D-glucosamine + acetate. The protein operates within glycolipid biosynthesis; lipid IV(A) biosynthesis; lipid IV(A) from (3R)-3-hydroxytetradecanoyl-[acyl-carrier-protein] and UDP-N-acetyl-alpha-D-glucosamine: step 2/6. Functionally, catalyzes the hydrolysis of UDP-3-O-myristoyl-N-acetylglucosamine to form UDP-3-O-myristoylglucosamine and acetate, the committed step in lipid A biosynthesis. This chain is UDP-3-O-acyl-N-acetylglucosamine deacetylase, found in Chlamydia abortus (strain DSM 27085 / S26/3) (Chlamydophila abortus).